We begin with the raw amino-acid sequence, 440 residues long: Endoplasmic reticulum junction formation protein lunapark (440 aa).

The Cytoplasmic segment spans residues 1–45 (MGALLAKWRAKPSTVEVLEKMEKDIQSLEEFRDKNQKLRKIWVAR). Residues 16–40 (EVLEKMEKDIQSLEEFRDKNQKLRK) are a coiled coil. Residues 46 to 66 (LFFYSTILYILTSLTVYLWYL) form a helical membrane-spanning segment. Residues 67-77 (PGGMTARLLTT) are Lumenal-facing. A helical transmembrane segment spans residues 78–98 (LLFLLFPVLIWFVRTLLILWF). Over 99–440 (SRRTERNNDA…ESEESFMETE (342 aa)) the chain is Cytoplasmic. Residues 100–128 (RRTERNNDALELLKAEKKKILEEVMEKET) adopt a coiled-coil conformation. The disordered stretch occupies residues 149 to 169 (LELPVPGPPITPRPGQDLRQR). The residue at position 159 (Thr-159) is a Phosphothreonine. 4 positions are modified to phosphoserine: Ser-177, Ser-179, Ser-188, and Ser-192. Phosphothreonine is present on Thr-198. The segment at 202-247 (QRDTSAPGGPPERSVQPTPQSNILQRRPGSPATAVSGMALHPPGPP) is disordered. Phosphoserine is present on residues Ser-206 and Ser-215. The segment covering 216-225 (VQPTPQSNIL) has biased composition (polar residues). A Phosphothreonine modification is found at Thr-219. A phosphoserine mark is found at Ser-222 and Ser-231. The C4-type; plays a role in ER morphology zinc-finger motif lies at 280 to 305 (CQQCFSHNGMALKEEFEYVAFRCAYC). Residues 316-440 (PQAPRLQEIS…ESEESFMETE (125 aa)) are disordered. Position 325 is a phosphoserine (Ser-325). Polar residues predominate over residues 334-343 (DSQGSVNTLQ). 2 stretches are compositionally biased toward acidic residues: residues 370-411 (QAIE…DDTE) and 431-440 (ESEESFMETE).

Belongs to the lunapark family. In terms of assembly, homodimer; homodimerization requires the C4-type zinc finger motif and decreases during mitosis in a phosphorylation-dependent manner. Post-translationally, phosphorylated. Phosphorylation at Thr-159 and Ser-325 occurs during interphase. Phosphorylation at Ser-177, Ser-179, Ser-188, Ser-192, Thr-198, Ser-206, Ser-215, Thr-219, Ser-222 and Ser-231 occurs during mitosis; these phosphorylations reduce both its homodimerization and the ER three-way tubular junction formation.

Its subcellular location is the endoplasmic reticulum membrane. In terms of biological role, endoplasmic reticulum (ER)-shaping membrane protein that plays a role in determining ER morphology. Involved in the stabilization of nascent three-way ER tubular junctions within the ER network. May also play a role as a curvature-stabilizing protein within three-way ER tubular junction network. The sequence is that of Endoplasmic reticulum junction formation protein lunapark (lnpk) from Xenopus laevis (African clawed frog).